Reading from the N-terminus, the 142-residue chain is Transcriptional regulator MraZ (142 aa).

SpoVT-AbrB domains follow at residues 5–51 (ASAL…PRPE) and 77–120 (AADV…DAAT).

The protein belongs to the MraZ family. Forms oligomers.

The protein localises to the cytoplasm. Its subcellular location is the nucleoid. The sequence is that of Transcriptional regulator MraZ from Ralstonia pickettii (strain 12J).